Consider the following 364-residue polypeptide: ATP synthase gamma chain, chloroplastic (364 aa).

Residues 1-41 constitute a chloroplast transit peptide; that stretch reads MACSLSFSSSVSTFHLPTTTQSTQAPPNNATTLPTTNPIQC. The disordered stretch occupies residues 17 to 36; sequence PTTTQSTQAPPNNATTLPTT. The segment covering 25–36 has biased composition (low complexity); that stretch reads APPNNATTLPTT. Cysteine 130 is an active-site residue. The cysteines at positions 240 and 246 are disulfide-linked.

Belongs to the ATPase gamma chain family. In terms of assembly, F-type ATPases have 2 components, CF(1) - the catalytic core - and CF(0) - the membrane proton channel. CF(1) has five subunits: alpha(3), beta(3), gamma(1), delta(1), epsilon(1). CF(0) has four main subunits: a, b, b' and c. In terms of processing, disulfide bond; Cys-240 and Cys-246 are known to form a disulfide bridge in the dark which gives rise to an inactive enzyme. Activation can be brought about by a ferredoxin-dependent reduction of the disulfide bond in the light.

Its subcellular location is the plastid. The protein resides in the chloroplast thylakoid membrane. Functionally, produces ATP from ADP in the presence of a proton gradient across the membrane. The gamma chain is believed to be important in regulating ATPase activity and the flow of protons through the CF(0) complex. The polypeptide is ATP synthase gamma chain, chloroplastic (ATPC) (Spinacia oleracea (Spinach)).